A 118-amino-acid polypeptide reads, in one-letter code: Holo-[acyl-carrier-protein] synthase (118 aa).

Mg(2+)-binding residues include Asp9 and Glu52.

This sequence belongs to the P-Pant transferase superfamily. AcpS family. Requires Mg(2+) as cofactor.

The protein resides in the cytoplasm. It catalyses the reaction apo-[ACP] + CoA = holo-[ACP] + adenosine 3',5'-bisphosphate + H(+). Transfers the 4'-phosphopantetheine moiety from coenzyme A to a Ser of acyl-carrier-protein. This Frankia alni (strain DSM 45986 / CECT 9034 / ACN14a) protein is Holo-[acyl-carrier-protein] synthase.